A 404-amino-acid chain; its full sequence is Formate-dependent phosphoribosylglycinamide formyltransferase (404 aa).

Residues 25 to 26 (EL) and Glu-85 contribute to the N(1)-(5-phospho-beta-D-ribosyl)glycinamide site. ATP is bound by residues Arg-118, Lys-159, 164–169 (SSGKGQ), 199–202 (EGFI), and Glu-207. An ATP-grasp domain is found at 123-318 (RLAAEELGLA…EFELHARAIL (196 aa)). 2 residues coordinate Mg(2+): Glu-277 and Glu-289. Residues Asp-296, Lys-365, and 372–373 (RR) contribute to the N(1)-(5-phospho-beta-D-ribosyl)glycinamide site.

The protein belongs to the PurK/PurT family. In terms of assembly, homodimer.

It catalyses the reaction N(1)-(5-phospho-beta-D-ribosyl)glycinamide + formate + ATP = N(2)-formyl-N(1)-(5-phospho-beta-D-ribosyl)glycinamide + ADP + phosphate + H(+). It functions in the pathway purine metabolism; IMP biosynthesis via de novo pathway; N(2)-formyl-N(1)-(5-phospho-D-ribosyl)glycinamide from N(1)-(5-phospho-D-ribosyl)glycinamide (formate route): step 1/1. Involved in the de novo purine biosynthesis. Catalyzes the transfer of formate to 5-phospho-ribosyl-glycinamide (GAR), producing 5-phospho-ribosyl-N-formylglycinamide (FGAR). Formate is provided by PurU via hydrolysis of 10-formyl-tetrahydrofolate. The protein is Formate-dependent phosphoribosylglycinamide formyltransferase of Burkholderia vietnamiensis (strain G4 / LMG 22486) (Burkholderia cepacia (strain R1808)).